The following is a 202-amino-acid chain: N-(5'-phosphoribosyl)anthranilate isomerase (202 aa).

This sequence belongs to the TrpF family.

It carries out the reaction N-(5-phospho-beta-D-ribosyl)anthranilate = 1-(2-carboxyphenylamino)-1-deoxy-D-ribulose 5-phosphate. It functions in the pathway amino-acid biosynthesis; L-tryptophan biosynthesis; L-tryptophan from chorismate: step 3/5. The protein is N-(5'-phosphoribosyl)anthranilate isomerase of Listeria welshimeri serovar 6b (strain ATCC 35897 / DSM 20650 / CCUG 15529 / CIP 8149 / NCTC 11857 / SLCC 5334 / V8).